A 396-amino-acid polypeptide reads, in one-letter code: ATP-dependent RNA helicase eIF4A (396 aa).

Positions 1–20 (MADKGLEDVPEGQIESNYDE) are disordered. The short motif at 23 to 51 (DSFDAMNLKAELLRGVYAYGFERPSAIQQ) is the Q motif element. The region spanning 54–224 (IMPVIKGHDV…TKFMRDPVRI (171 aa)) is the Helicase ATP-binding domain. Position 67-74 (67-74 (AQSGTGKT)) interacts with ATP. The DEAD box motif lies at 172-175 (DEAD). One can recognise a Helicase C-terminal domain in the interval 235 to 396 (GIKQFYIAVE…EMPMNVADLI (162 aa)).

This sequence belongs to the DEAD box helicase family. eIF4A subfamily. In terms of assembly, component of the eIF4F complex, which composition varies with external and internal environmental conditions. It is composed of at least eIF4A, eIF4E and eIF4G.

It localises to the cytoplasm. It carries out the reaction ATP + H2O = ADP + phosphate + H(+). In terms of biological role, ATP-dependent RNA helicase which is a subunit of the eIF4F complex involved in cap recognition and is required for mRNA binding to ribosome. In the current model of translation initiation, eIF4A unwinds RNA secondary structures in the 5'-UTR of mRNAs which is necessary to allow efficient binding of the small ribosomal subunit, and subsequent scanning for the initiator codon. In Phaeosphaeria nodorum (strain SN15 / ATCC MYA-4574 / FGSC 10173) (Glume blotch fungus), this protein is ATP-dependent RNA helicase eIF4A (TIF1).